The chain runs to 195 residues: MSSKEQNTPDEQVSQESEMEQGQQAEAAPETVDVVDPRDERIAELEAALSQAQQREHDSVLRAKAEMENVRRRSEQDVEKAHKFALERFAGELLPVIDNLERALDMSDKANAELASTIEGIELTLKSLLDAVRKFGLDVVGDTHVPFNPEVHQAMTMLESDEHEPNQVMMVMQKGYTLNGRLIRPAMVAVSKAKS.

A compositionally biased stretch (polar residues) spans 1 to 24; it reads MSSKEQNTPDEQVSQESEMEQGQQ. Positions 1 to 40 are disordered; sequence MSSKEQNTPDEQVSQESEMEQGQQAEAAPETVDVVDPRDE.

This sequence belongs to the GrpE family. As to quaternary structure, homodimer.

The protein localises to the cytoplasm. Participates actively in the response to hyperosmotic and heat shock by preventing the aggregation of stress-denatured proteins, in association with DnaK and GrpE. It is the nucleotide exchange factor for DnaK and may function as a thermosensor. Unfolded proteins bind initially to DnaJ; upon interaction with the DnaJ-bound protein, DnaK hydrolyzes its bound ATP, resulting in the formation of a stable complex. GrpE releases ADP from DnaK; ATP binding to DnaK triggers the release of the substrate protein, thus completing the reaction cycle. Several rounds of ATP-dependent interactions between DnaJ, DnaK and GrpE are required for fully efficient folding. This is Protein GrpE from Sodalis glossinidius (strain morsitans).